We begin with the raw amino-acid sequence, 411 residues long: Putative competence-damage inducible protein (411 aa).

Belongs to the CinA family.

In Caldicellulosiruptor saccharolyticus (strain ATCC 43494 / DSM 8903 / Tp8T 6331), this protein is Putative competence-damage inducible protein.